The following is a 334-amino-acid chain: Malate dehydrogenase 2 (334 aa).

12-18 (GAAGRVA) lines the NAD(+) pocket. Substrate is bound by residues Arg93 and Arg99. NAD(+)-binding positions include Asn106, Gln113, and 130–132 (VGN). Residues Asn132 and Arg166 each coordinate substrate. His191 functions as the Proton acceptor in the catalytic mechanism.

The protein belongs to the LDH/MDH superfamily. MDH type 2 family.

The enzyme catalyses (S)-malate + NAD(+) = oxaloacetate + NADH + H(+). Functionally, catalyzes the reversible oxidation of malate to oxaloacetate. This chain is Malate dehydrogenase 2, found in Albidiferax ferrireducens (strain ATCC BAA-621 / DSM 15236 / T118) (Rhodoferax ferrireducens).